The following is a 666-amino-acid chain: MSDSHLTAFDKASKAGFIIALGIVYGDIGTSPLYTMQSLVENQGGVNQVSESFILGSISLIIWTLTLITTIKYVLIALKADNHHEGGIFSLFTLVRKMSPWLIIPAMIGGATLLSDGALTPAVTVTSAIEGLKAVPGLSHIYQNQTNIIITTLVILIVLFGIQRFGTGFIGKIFGPVMFIWFSFLGVSGFFNTLGHLEIFKAINPYYALHLLFSPENHRGIFILGSIFLATTGAEALYSDLGHVGRGNIYVSWPFVKMCIVWSYCGQAAWILANKHSGIELNPFFASVPSQLRVYLVSLATLAAIIASQALISGSFTLVSEAMRLKIFPLFRVTYPGANLGQLYIPVINWILFAVTSCTVLAFRTSAHMEAAYGLAITITMLMTTILLKYYLIKKGTRPILAHLAMAFFALVEFIFFLASAIKFMHGGYAVVILALAIVFVMFIWHAGTRIVFKYVKSLNLNDYKEQIKQLRDDVCFDLYQTNVVYLSNRMQDHMIDRSILYSILDKRPKRAQVYWFVNVQVTDEPYTAKYKVDMMGTDYMVRVNLYLGFRMPQTVPRYLRTIVQDLMESGRLPKQEQEYTITPGRDVGDFRFVLIEERVSNARQLSNFERFIMQTKASIKHVTASPMRWFGLQYSEVTLEVVPLILSDVLKLPIKELVPVEDSEA.

The next 12 helical transmembrane spans lie at 16-36 (GFII…LYTM), 58-78 (ISLI…LIAL), 100-120 (PWLI…GALT), 141-161 (IYQN…VLFG), 165-185 (FGTG…FSFL), 221-241 (IFIL…YSDL), 253-273 (WPFV…WILA), 294-314 (VYLV…LISG), 343-363 (LYIP…VLAF), 373-393 (YGLA…YYLI), 399-419 (PILA…FFLA), and 424-444 (FMHG…VMFI).

This sequence belongs to the HAK/KUP transporter (TC 2.A.72) family.

It localises to the cell membrane. It carries out the reaction K(+)(in) + H(+)(in) = K(+)(out) + H(+)(out). Functionally, transport of potassium into the cell. Likely operates as a K(+):H(+) symporter. The chain is Probable potassium transport system protein Kup from Streptococcus pyogenes serotype M4 (strain MGAS10750).